The primary structure comprises 233 residues: Guanylate kinase (233 aa).

One can recognise a Guanylate kinase-like domain in the interval 3–184 (GTIFIISAPS…AVEQLRAIVL (182 aa)). 10 to 17 (APSGSGKS) contributes to the ATP binding site.

This sequence belongs to the guanylate kinase family.

It is found in the cytoplasm. The catalysed reaction is GMP + ATP = GDP + ADP. Its function is as follows. Essential for recycling GMP and indirectly, cGMP. The sequence is that of Guanylate kinase from Koribacter versatilis (strain Ellin345).